Reading from the N-terminus, the 620-residue chain is GTP-binding protein At3g49725, chloroplastic (620 aa).

A chloroplast-targeting transit peptide spans 1 to 65 (MSVTTSFGIW…SSFLARDRLR (65 aa)). The segment at 57–100 (SFLARDRLRSKTPSSSPFSSKRHTPKTSEIEEESTPKDSVLLNP) is disordered. Residues 346–585 (GTIAVVGYTN…LIDDKMKEKK (240 aa)) form the Hflx-type G domain. GTP is bound by residues 352–359 (GYTNAGKS), 377–381 (FATLD), 399–402 (DTVG), and 468–471 (NKID). Mg(2+) contacts are provided by S359 and T379. Composition is skewed to acidic residues over residues 478–497 (EEEK…EDEA) and 511–521 (TVDEDQIQNGD). Residues 478–521 (EEEKYLDDGEGVGEEDEDEADLKAEETVDASEATVDEDQIQNGD) form a disordered region. GTP is bound at residue 563–565 (SAL). Positions 597-620 (LHKRKWRPPRNDDEEERLIPLDQR) are disordered.

This sequence belongs to the TRAFAC class OBG-HflX-like GTPase superfamily. HflX GTPase family. It depends on Mg(2+) as a cofactor.

It is found in the plastid. It localises to the chloroplast. The sequence is that of GTP-binding protein At3g49725, chloroplastic from Arabidopsis thaliana (Mouse-ear cress).